A 408-amino-acid chain; its full sequence is Endo-1,4-beta-xylanase A (408 aa).

The signal sequence occupies residues 1–19 (MKLSASFAALALLLPFVQA). One can recognise a CBM1 domain in the interval 20–55 (QSPVWGQCGGIGWTGPTTCTAGNVCQEYSAYYSQCI). The segment at 64–89 (TSVSTAPNPPPTSHTSTSSAPSGAST) is disordered. Low complexity predominate over residues 76 to 89 (SHTSTSSAPSGAST). The region spanning 88–405 (STSTAKLNTL…KPAYDGIAIG (318 aa)) is the GH10 domain. The Proton donor role is filled by Glu-222. The active-site Nucleophile is Glu-327. A disulfide bond links Cys-355 and Cys-361.

The protein belongs to the glycosyl hydrolase 10 (cellulase F) family.

It is found in the secreted. The catalysed reaction is Endohydrolysis of (1-&gt;4)-beta-D-xylosidic linkages in xylans.. It participates in glycan degradation; xylan degradation. Endo-1,4-beta-xylanase involved in the hydrolysis of xylan, a major structural heterogeneous polysaccharide found in plant biomass representing the second most abundant polysaccharide in the biosphere, after cellulose. The polypeptide is Endo-1,4-beta-xylanase A (xynA) (Phanerodontia chrysosporium (White-rot fungus)).